Here is a 298-residue protein sequence, read N- to C-terminus: MATNEEHLRKPEWLKIKLNTNENYTGLKKLMRENRLHTVCEEAKCPNIHECWAVRRTATFMILGNVCTRACRFCAVKTGLPTELDWQEPERVAESVRLMNLKHVVVTAVARDDLKDGGAAVFAETVRAIRRKNPFTTIEVLPSDMGGVYENLKTLMDARPDILNHNIETVRRLTPRVRARATYERSLEFLRRAKELQPDIPTKSSIMVGLGETKEEIIEAMDDLRANHVDILTIGQYLQPTKKHLKVVKYYHPDEFRELKEIALSKGFTHCEAGPLVRSSYHADEQVNAASAARQMKA.

Residues C40, C45, C51, C67, C71, C74, and S280 each coordinate [4Fe-4S] cluster. Positions 53–269 (AVRRTATFMI…KEIALSKGFT (217 aa)) constitute a Radical SAM core domain.

Belongs to the radical SAM superfamily. Lipoyl synthase family. It depends on [4Fe-4S] cluster as a cofactor.

The protein localises to the cytoplasm. It carries out the reaction [[Fe-S] cluster scaffold protein carrying a second [4Fe-4S](2+) cluster] + N(6)-octanoyl-L-lysyl-[protein] + 2 oxidized [2Fe-2S]-[ferredoxin] + 2 S-adenosyl-L-methionine + 4 H(+) = [[Fe-S] cluster scaffold protein] + N(6)-[(R)-dihydrolipoyl]-L-lysyl-[protein] + 4 Fe(3+) + 2 hydrogen sulfide + 2 5'-deoxyadenosine + 2 L-methionine + 2 reduced [2Fe-2S]-[ferredoxin]. Its pathway is protein modification; protein lipoylation via endogenous pathway; protein N(6)-(lipoyl)lysine from octanoyl-[acyl-carrier-protein]. Catalyzes the radical-mediated insertion of two sulfur atoms into the C-6 and C-8 positions of the octanoyl moiety bound to the lipoyl domains of lipoate-dependent enzymes, thereby converting the octanoylated domains into lipoylated derivatives. The protein is Lipoyl synthase of Geobacillus sp. (strain WCH70).